The following is a 131-amino-acid chain: Fluoride-specific ion channel FluC (131 aa).

4 helical membrane-spanning segments follow: residues 10-30, 36-56, 71-91, and 99-119; these read AAVAIGGALGAVCRYLLSGLV, FPMGTVLVNVLGSFVLGFLTW, LATVGFCGGLTTLSTMAYETV, and VLSILYLTANVVLGIAAVLGG. Residues Gly78 and Thr81 each coordinate Na(+).

It belongs to the fluoride channel Fluc/FEX (TC 1.A.43) family.

The protein resides in the cell membrane. The enzyme catalyses fluoride(in) = fluoride(out). Na(+) is not transported, but it plays an essential structural role and its presence is essential for fluoride channel function. Functionally, fluoride-specific ion channel. Important for reducing fluoride concentration in the cell, thus reducing its toxicity. This Methanopyrus kandleri (strain AV19 / DSM 6324 / JCM 9639 / NBRC 100938) protein is Fluoride-specific ion channel FluC.